We begin with the raw amino-acid sequence, 368 residues long: tRNA 2-selenouridine synthase (368 aa).

Residues 15-138 (FLNQHPIMDV…MRQYLIGVIE (124 aa)) enclose the Rhodanese domain. Catalysis depends on cysteine 98, which acts as the S-selanylcysteine intermediate.

Belongs to the SelU family. Monomer.

It catalyses the reaction 5-methylaminomethyl-2-thiouridine(34) in tRNA + selenophosphate + (2E)-geranyl diphosphate + H2O + H(+) = 5-methylaminomethyl-2-selenouridine(34) in tRNA + (2E)-thiogeraniol + phosphate + diphosphate. It carries out the reaction 5-methylaminomethyl-2-thiouridine(34) in tRNA + (2E)-geranyl diphosphate = 5-methylaminomethyl-S-(2E)-geranyl-thiouridine(34) in tRNA + diphosphate. The enzyme catalyses 5-methylaminomethyl-S-(2E)-geranyl-thiouridine(34) in tRNA + selenophosphate + H(+) = 5-methylaminomethyl-2-(Se-phospho)selenouridine(34) in tRNA + (2E)-thiogeraniol. The catalysed reaction is 5-methylaminomethyl-2-(Se-phospho)selenouridine(34) in tRNA + H2O = 5-methylaminomethyl-2-selenouridine(34) in tRNA + phosphate. Functionally, involved in the post-transcriptional modification of the uridine at the wobble position (U34) of tRNA(Lys), tRNA(Glu) and tRNA(Gln). Catalyzes the conversion of 2-thiouridine (S2U-RNA) to 2-selenouridine (Se2U-RNA). Acts in a two-step process involving geranylation of 2-thiouridine (S2U) to S-geranyl-2-thiouridine (geS2U) and subsequent selenation of the latter derivative to 2-selenouridine (Se2U) in the tRNA chain. The sequence is that of tRNA 2-selenouridine synthase from Shewanella baltica (strain OS185).